The following is a 155-amino-acid chain: 6,7-dimethyl-8-ribityllumazine synthase (155 aa).

5-amino-6-(D-ribitylamino)uracil-binding positions include Phe-23, 57-59 (AFE), and 81-83 (AVI). 86–87 (ST) serves as a coordination point for (2S)-2-hydroxy-3-oxobutyl phosphate. Residue His-89 is the Proton donor of the active site. 5-amino-6-(D-ribitylamino)uracil is bound at residue Phe-114. Position 128 (Arg-128) interacts with (2S)-2-hydroxy-3-oxobutyl phosphate.

The protein belongs to the DMRL synthase family.

The catalysed reaction is (2S)-2-hydroxy-3-oxobutyl phosphate + 5-amino-6-(D-ribitylamino)uracil = 6,7-dimethyl-8-(1-D-ribityl)lumazine + phosphate + 2 H2O + H(+). The protein operates within cofactor biosynthesis; riboflavin biosynthesis; riboflavin from 2-hydroxy-3-oxobutyl phosphate and 5-amino-6-(D-ribitylamino)uracil: step 1/2. Its function is as follows. Catalyzes the formation of 6,7-dimethyl-8-ribityllumazine by condensation of 5-amino-6-(D-ribitylamino)uracil with 3,4-dihydroxy-2-butanone 4-phosphate. This is the penultimate step in the biosynthesis of riboflavin. This Desulfatibacillum aliphaticivorans protein is 6,7-dimethyl-8-ribityllumazine synthase.